The chain runs to 309 residues: uncharacterized protein (309 aa).

Positions 272–291 (PSLDAPSETVEAFPEPQKNL) are disordered.

This is an uncharacterized protein from Bacillus subtilis (strain 168).